The sequence spans 345 residues: Probable deoxyhypusine synthase 2 (345 aa).

The active-site Nucleophile is the Lys292.

Belongs to the deoxyhypusine synthase family. The cofactor is NAD(+).

The enzyme catalyses [eIF5A protein]-L-lysine + spermidine = [eIF5A protein]-deoxyhypusine + propane-1,3-diamine. Its pathway is protein modification; eIF5A hypusination. In terms of biological role, catalyzes the NAD-dependent oxidative cleavage of spermidine and the subsequent transfer of the butylamine moiety of spermidine to the epsilon-amino group of a specific lysine residue of the eIF-5A precursor protein to form the intermediate deoxyhypusine residue. This is Probable deoxyhypusine synthase 2 (dys2) from Methanosarcina mazei (strain ATCC BAA-159 / DSM 3647 / Goe1 / Go1 / JCM 11833 / OCM 88) (Methanosarcina frisia).